The sequence spans 629 residues: tRNA uridine 5-carboxymethylaminomethyl modification enzyme MnmG (629 aa).

14-19 contacts FAD; it reads GAGHAG. 274–288 contributes to the NAD(+) binding site; that stretch reads GPRYCPSIEDKVVRF.

This sequence belongs to the MnmG family. As to quaternary structure, homodimer. Heterotetramer of two MnmE and two MnmG subunits. It depends on FAD as a cofactor.

The protein resides in the cytoplasm. Its function is as follows. NAD-binding protein involved in the addition of a carboxymethylaminomethyl (cmnm) group at the wobble position (U34) of certain tRNAs, forming tRNA-cmnm(5)s(2)U34. This is tRNA uridine 5-carboxymethylaminomethyl modification enzyme MnmG from Xylella fastidiosa (strain 9a5c).